The following is a 102-amino-acid chain: UPF0147 protein MTH_1407 (102 aa).

Belongs to the UPF0147 family.

This Methanothermobacter thermautotrophicus (strain ATCC 29096 / DSM 1053 / JCM 10044 / NBRC 100330 / Delta H) (Methanobacterium thermoautotrophicum) protein is UPF0147 protein MTH_1407.